Here is a 401-residue protein sequence, read N- to C-terminus: Insertion element ISM1 uncharacterized 48.3 kDa protein (401 aa).

This polypeptide is involved in transposition, and should therefore bind to nucleic acids. This chain is Insertion element ISM1 uncharacterized 48.3 kDa protein, found in Methanobrevibacter smithii.